Reading from the N-terminus, the 97-residue chain is Small ribosomal subunit protein bS20 (97 aa).

Residues 1-22 form a disordered region; the sequence is MANSKSALKRIRTSERNRLRNK.

Belongs to the bacterial ribosomal protein bS20 family.

Its function is as follows. Binds directly to 16S ribosomal RNA. This Crocosphaera subtropica (strain ATCC 51142 / BH68) (Cyanothece sp. (strain ATCC 51142)) protein is Small ribosomal subunit protein bS20.